We begin with the raw amino-acid sequence, 2325 residues long: Serine/threonine-protein kinase MEC1 (2325 aa).

Positions 1363-1886 (LLTTRSAECD…VWYIFSHARS (524 aa)) constitute an FAT domain. Residues 1993 to 2309 (FDDNVNIFFS…QVDVLIQEAT (317 aa)) enclose the PI3K/PI4K catalytic domain. Residues 1999 to 2005 (IFFSLQM) form a G-loop region. Residues 2174-2182 (GLGDRHCEN) are catalytic loop. Residues 2194–2218 (HIDFDCLFEKGTTLPTPEIVPFRLT) form an activation loop region. Positions 2293–2325 (LPMNIHGQVDVLIQEATSLERLSQMYAGWAAYM) constitute an FATC domain.

This sequence belongs to the PI3/PI4-kinase family. ATM subfamily.

The protein localises to the nucleus. The catalysed reaction is L-seryl-[protein] + ATP = O-phospho-L-seryl-[protein] + ADP + H(+). It carries out the reaction L-threonyl-[protein] + ATP = O-phospho-L-threonyl-[protein] + ADP + H(+). Functionally, serine/threonine protein kinase which activates checkpoint signaling upon genotoxic stresses such as ionizing radiation (IR), ultraviolet light (UV), or DNA replication stalling, thereby acting as a DNA damage sensor. Recognizes the substrate consensus sequence [ST]-Q. Recruited to DNA lesions in order to initiate the DNA repair by homologous recombination. Phosphorylates histone H2A to form H2AS128ph (gamma-H2A) at sites of DNA damage, also involved in the regulation of DNA damage response mechanism. Required for cell growth and meiotic recombination. The chain is Serine/threonine-protein kinase MEC1 (MEC1) from Candida albicans (strain SC5314 / ATCC MYA-2876) (Yeast).